Here is a 273-residue protein sequence, read N- to C-terminus: Ribosomal RNA small subunit methyltransferase A (273 aa).

S-adenosyl-L-methionine-binding residues include Asn18, Leu20, Gly45, Glu66, Asp91, and Asn113.

This sequence belongs to the class I-like SAM-binding methyltransferase superfamily. rRNA adenine N(6)-methyltransferase family. RsmA subfamily.

It is found in the cytoplasm. The catalysed reaction is adenosine(1518)/adenosine(1519) in 16S rRNA + 4 S-adenosyl-L-methionine = N(6)-dimethyladenosine(1518)/N(6)-dimethyladenosine(1519) in 16S rRNA + 4 S-adenosyl-L-homocysteine + 4 H(+). Specifically dimethylates two adjacent adenosines (A1518 and A1519) in the loop of a conserved hairpin near the 3'-end of 16S rRNA in the 30S particle. May play a critical role in biogenesis of 30S subunits. The protein is Ribosomal RNA small subunit methyltransferase A of Salmonella agona (strain SL483).